A 584-amino-acid chain; its full sequence is Kinesin-like protein KIN-10C (584 aa).

Positions Pro-11–Val-324 constitute a Kinesin motor domain. Gly-99 to Thr-106 contributes to the ATP binding site. Disordered stretches follow at residues Ser-377–Gln-398 and Asp-445–Thr-469.

It belongs to the TRAFAC class myosin-kinesin ATPase superfamily. Kinesin family. KIN-10 subfamily.

This Oryza sativa subsp. japonica (Rice) protein is Kinesin-like protein KIN-10C.